The following is a 121-amino-acid chain: Basic phospholipase A2 BmjeTX-II (121 aa).

Disulfide bonds link C26–C114, C28–C45, C44–C95, C50–C121, C51–C88, C58–C82, and C76–C86. Residues Y27, G29, and G31 each contribute to the Ca(2+) site. The active site involves H48. Residue D49 participates in Ca(2+) binding. D89 is a catalytic residue.

Ca(2+) is required as a cofactor. In terms of tissue distribution, expressed by the venom gland.

The protein localises to the secreted. It catalyses the reaction a 1,2-diacyl-sn-glycero-3-phosphocholine + H2O = a 1-acyl-sn-glycero-3-phosphocholine + a fatty acid + H(+). Functionally, snake venom phospholipase A2 (PLA2) that induces blockade of neuromuscular contraction in an indirectly stimulated chick biventer cervicis nerve-muscle preparation. Does not inhibit contraction of chick biventer cervicic nerve-muscle preparation in response to treatment with acetylcholine or KCl. The neuromuscular blockade is mediated by inhibitory action at the presynaptic motor nerve endings. Lyses skeletal myoblasts and myotubes in vitro, and intramuscular injection causes local muscle necrosis. Induces edema in the mouse foot pad. Induces a transient increase of IL-6 levels. PLA2 catalyzes the calcium-dependent hydrolysis of the 2-acyl groups in 3-sn-phosphoglycerides. This is Basic phospholipase A2 BmjeTX-II from Bothrops marajoensis (Marajo lancehead).